A 1564-amino-acid chain; its full sequence is NACHT domain- and WD repeat-containing protein 1 (1564 aa).

The 327-residue stretch at 335-661 (TPLVLFGPPG…LLAIAHRQLV (327 aa)) folds into the NACHT domain. 341–348 (GPPGIGKT) serves as a coordination point for ATP. WD repeat units follow at residues 866-905 (GCHK…VIHM), 908-947 (GHTG…EKFT), 956-994 (PAEP…PVFH), 998-1037 (DASD…LQGK), 1044-1082 (KEET…LLEK), 1083-1121 (LPDA…RRFM), 1126-1165 (EHED…TLLD), 1167-1207 (LEGV…RSRV), 1212-1251 (LDRT…EQDS), 1253-1290 (DTSS…RQDV), 1291-1327 (ICIP…VLDI), 1338-1376 (GPRY…LYEC), 1380-1418 (KAFP…WDLQ), and 1425-1462 (EMSY…VWSV).

In terms of assembly, may interact with HSP90AA1, HSP90AB1 and BAG2. In terms of tissue distribution, expressed at highest levels in prostate, followed by testis, retina, trachea and optic nerve. Also detected in brain, epididymis, lung, vagina and pituitary. In the prostate, tends to be up-regulated during malignant progression compared to normal epithelium (at protein level).

It is found in the cytoplasm. The protein resides in the cytosol. May play a role in the control of androgen receptor (AR) protein steady-state levels. The sequence is that of NACHT domain- and WD repeat-containing protein 1 (NWD1) from Homo sapiens (Human).